A 636-amino-acid chain; its full sequence is 1-deoxy-D-xylulose-5-phosphate synthase (636 aa).

Residues His84 and 125-127 (GHS) contribute to the thiamine diphosphate site. Asp156 contributes to the Mg(2+) binding site. Thiamine diphosphate contacts are provided by residues 157-158 (GA), Asn185, Phe292, and Glu375. Asn185 is a binding site for Mg(2+).

The protein belongs to the transketolase family. DXPS subfamily. In terms of assembly, homodimer. Requires Mg(2+) as cofactor. The cofactor is thiamine diphosphate.

The catalysed reaction is D-glyceraldehyde 3-phosphate + pyruvate + H(+) = 1-deoxy-D-xylulose 5-phosphate + CO2. It participates in metabolic intermediate biosynthesis; 1-deoxy-D-xylulose 5-phosphate biosynthesis; 1-deoxy-D-xylulose 5-phosphate from D-glyceraldehyde 3-phosphate and pyruvate: step 1/1. In terms of biological role, catalyzes the acyloin condensation reaction between C atoms 2 and 3 of pyruvate and glyceraldehyde 3-phosphate to yield 1-deoxy-D-xylulose-5-phosphate (DXP). The protein is 1-deoxy-D-xylulose-5-phosphate synthase of Cellvibrio japonicus (strain Ueda107) (Pseudomonas fluorescens subsp. cellulosa).